The primary structure comprises 414 residues: Ornithine aminotransferase (414 aa).

Cysteines 154 and 163 form a disulfide. Lys262 is modified (N6-(pyridoxal phosphate)lysine).

Belongs to the class-III pyridoxal-phosphate-dependent aminotransferase family. As to quaternary structure, homodimer. Requires pyridoxal 5'-phosphate as cofactor. The disulfide bond between Cys-154 and Cys-163 is reduced by TRX1 which increases OAT catalytic activity.

The protein localises to the cytoplasm. It catalyses the reaction a 2-oxocarboxylate + L-ornithine = L-glutamate 5-semialdehyde + an L-alpha-amino acid. The catalysed reaction is L-ornithine + 2-oxoglutarate = L-glutamate 5-semialdehyde + L-glutamate. It functions in the pathway amino-acid biosynthesis; L-proline biosynthesis; L-glutamate 5-semialdehyde from L-ornithine: step 1/1. With respect to regulation, unlike for mammalian OATs, activity is increased by TRX1-mediated reduction of the disulfide bond between Cys-154 and Cys-163. Binding to TRX1 may also induce conformational changes that facilitate substrate binding. The enzyme has a very narrow substrate specificity and can only catalyze the transamination of alpha-ketoglutarate with ornithine or N-acetylornithine and, to a lesser extent, of glutamate-5-semialdehyde with glutamate and alanine. This is Ornithine aminotransferase from Plasmodium falciparum (isolate 3D7).